An 842-amino-acid chain; its full sequence is Translation initiation factor IF-2 (842 aa).

The tract at residues 94–259 (QRSPEEIQAE…HGFQNPTGPV (166 aa)) is disordered. Residues 96-138 (SPEEIQAEQKRELDERRAAENAARDKVEAEVRQRNEEQARRQA) are compositionally biased toward basic and acidic residues. Residues 139 to 148 (ADSAVAAPAP) are compositionally biased toward low complexity. Residues 149–159 (AAKPEPAPAAA) are compositionally biased toward pro residues. Residues 160 to 172 (PAPVVADAPASED) are compositionally biased toward low complexity. Basic and acidic residues-rich tracts occupy residues 173 to 202 (AAARAAERKKDETRRNESRTRDDDRRRGEA) and 226 to 235 (TTDEESDGAR). Over residues 236–249 (RGRGGKGKLKKRNQ) the composition is skewed to basic residues. The region spanning 342–509 (SRAPVVTVMG…AVLLQAEILE (168 aa)) is the tr-type G domain. The interval 351 to 358 (GHVDHGKT) is G1. 351-358 (GHVDHGKT) provides a ligand contact to GTP. The segment at 376–380 (GITQH) is G2. Positions 397 to 400 (DTPG) are G3. GTP contacts are provided by residues 397-401 (DTPGH) and 451-454 (NKID). Positions 451 to 454 (NKID) are G4. The segment at 487–489 (SAK) is G5.

Belongs to the TRAFAC class translation factor GTPase superfamily. Classic translation factor GTPase family. IF-2 subfamily.

It localises to the cytoplasm. Its function is as follows. One of the essential components for the initiation of protein synthesis. Protects formylmethionyl-tRNA from spontaneous hydrolysis and promotes its binding to the 30S ribosomal subunits. Also involved in the hydrolysis of GTP during the formation of the 70S ribosomal complex. The chain is Translation initiation factor IF-2 from Pseudomonas putida (strain GB-1).